Reading from the N-terminus, the 136-residue chain is ATP synthase epsilon chain (136 aa).

Belongs to the ATPase epsilon chain family. F-type ATPases have 2 components, CF(1) - the catalytic core - and CF(0) - the membrane proton channel. CF(1) has five subunits: alpha(3), beta(3), gamma(1), delta(1), epsilon(1). CF(0) has three main subunits: a, b and c.

The protein localises to the cellular thylakoid membrane. Produces ATP from ADP in the presence of a proton gradient across the membrane. This chain is ATP synthase epsilon chain (atpC), found in Prochloron didemni.